Here is a 235-residue protein sequence, read N- to C-terminus: uncharacterized protein (235 aa).

The interval 37–235 (QNAKLNDGDN…GGEDYPWPWN (199 aa)) is disordered. Positions 72–89 (GSDDYSDVEDGGAEEGDS) are enriched in acidic residues. Residues 112 to 124 (TSSTSTASTSSGS) are compositionally biased toward low complexity. Residues 152-170 (RRPELDLSPKIENRSDSSS) show a composition bias toward basic and acidic residues. The span at 185 to 202 (NKDNPSRGQGNENPSASD) shows a compositional bias: polar residues.

Belongs to the herpesviridae BKRF4 family.

This is an uncharacterized protein from Alcelaphine herpesvirus 1 (strain C500) (AlHV-1).